Reading from the N-terminus, the 339-residue chain is Protein pelota homolog (339 aa).

It belongs to the eukaryotic release factor 1 family. Pelota subfamily. In terms of assembly, monomer. A divalent metal cation serves as cofactor.

The protein resides in the cytoplasm. In terms of biological role, may function in recognizing stalled ribosomes, interact with stem-loop structures in stalled mRNA molecules, and effect endonucleolytic cleavage of the mRNA. May play a role in the release non-functional ribosomes and degradation of damaged mRNAs. Has endoribonuclease activity. The chain is Protein pelota homolog (pelA) from Thermoplasma acidophilum (strain ATCC 25905 / DSM 1728 / JCM 9062 / NBRC 15155 / AMRC-C165).